Reading from the N-terminus, the 182-residue chain is UPF0301 protein NMCC_1249 (182 aa).

This sequence belongs to the UPF0301 (AlgH) family.

The sequence is that of UPF0301 protein NMCC_1249 from Neisseria meningitidis serogroup C (strain 053442).